The sequence spans 251 residues: Triosephosphate isomerase (251 aa).

9-11 is a substrate binding site; it reads NWK. The active-site Electrophile is the histidine 95. The active-site Proton acceptor is glutamate 167. Residues glycine 173, serine 213, and 234–235 each bind substrate; that span reads GG.

This sequence belongs to the triosephosphate isomerase family. Homodimer.

The protein localises to the cytoplasm. It carries out the reaction D-glyceraldehyde 3-phosphate = dihydroxyacetone phosphate. It functions in the pathway carbohydrate biosynthesis; gluconeogenesis. Its pathway is carbohydrate degradation; glycolysis; D-glyceraldehyde 3-phosphate from glycerone phosphate: step 1/1. Involved in the gluconeogenesis. Catalyzes stereospecifically the conversion of dihydroxyacetone phosphate (DHAP) to D-glyceraldehyde-3-phosphate (G3P). The polypeptide is Triosephosphate isomerase (Citrifermentans bemidjiense (strain ATCC BAA-1014 / DSM 16622 / JCM 12645 / Bem) (Geobacter bemidjiensis)).